A 126-amino-acid polypeptide reads, in one-letter code: Glycine cleavage system H protein (126 aa).

The 83-residue stretch at 22-104 (TVTIGITEYA…YEKAWMVKVE (83 aa)) folds into the Lipoyl-binding domain. Position 63 is an N6-lipoyllysine (Lys-63).

Belongs to the GcvH family. As to quaternary structure, the glycine cleavage system is composed of four proteins: P, T, L and H. (R)-lipoate is required as a cofactor.

Functionally, the glycine cleavage system catalyzes the degradation of glycine. The H protein shuttles the methylamine group of glycine from the P protein to the T protein. Is also involved in protein lipoylation via its role as an octanoyl/lipoyl carrier protein intermediate. This chain is Glycine cleavage system H protein, found in Staphylococcus saprophyticus subsp. saprophyticus (strain ATCC 15305 / DSM 20229 / NCIMB 8711 / NCTC 7292 / S-41).